Reading from the N-terminus, the 295-residue chain is Sulfotransferase 1A2 (295 aa).

Residue 48–53 coordinates 3'-phosphoadenylyl sulfate; sequence KSGTTW. 106–108 serves as a coordination point for substrate; it reads KTH. His-108 (proton acceptor) is an active-site residue. Residues Arg-130, Ser-138, Tyr-193, 227–232, and 255–259 contribute to the 3'-phosphoadenylyl sulfate site; these read TSFKEM and FMRKG.

Belongs to the sulfotransferase 1 family. Homodimer.

The protein resides in the cytoplasm. The catalysed reaction is a phenol + 3'-phosphoadenylyl sulfate = an aryl sulfate + adenosine 3',5'-bisphosphate + H(+). Sulfotransferase that utilizes 3'-phospho-5'-adenylyl sulfate (PAPS) as sulfonate donor to catalyze the sulfate conjugation of catecholamines, phenolic drugs and neurotransmitters. Is also responsible for the sulfonation and activation of minoxidil. Mediates the metabolic activation of carcinogenic N-hydroxyarylamines to DNA binding products and could so participate as modulating factor of cancer risk. The chain is Sulfotransferase 1A2 (SULT1A2) from Homo sapiens (Human).